The chain runs to 801 residues: Ribosome biogenesis protein ERB1 (801 aa).

Disordered stretches follow at residues 1–135 (MGSK…LEDR) and 358–377 (PEYL…DPED). Over residues 35–90 (SEDEEDYIPSSEVDEDDDDDADESASEDSDDSNDSEDDEVEEDDEALLSDEIPSEG) the composition is skewed to acidic residues. Composition is skewed to basic and acidic residues over residues 91 to 113 (ESEK…KEPS), 124 to 135 (PPRKEDEELEDR), and 362 to 377 (PTKE…DPED). 2 WD repeats span residues 451-490 (GHEG…QVWS) and 494-534 (NGDE…VTPA). Positions 546 to 570 (GFGHATNGKQQANLPPGKEPPGKWA) are disordered. WD repeat units lie at residues 586-628 (TVRS…TQIP), 631-669 (KLNG…LVKI), 672-711 (PGAK…RPYK), 715-755 (FHTE…DQLE), and 771-801 (VNKL…RLWM).

This sequence belongs to the WD repeat BOP1/ERB1 family. Component of the NOP7 complex, composed of ERB1, NOP7 and YTM1. The complex is held together by ERB1, which interacts with NOP7 via its N-terminal domain and with YTM1 via a high-affinity interaction between the seven-bladed beta-propeller domains of the 2 proteins. The NOP7 complex associates with the 66S pre-ribosome.

It is found in the nucleus. The protein resides in the nucleolus. It localises to the nucleoplasm. Component of the NOP7 complex, which is required for maturation of the 25S and 5.8S ribosomal RNAs and formation of the 60S ribosome. The polypeptide is Ribosome biogenesis protein ERB1 (Chaetomium thermophilum (strain DSM 1495 / CBS 144.50 / IMI 039719) (Thermochaetoides thermophila)).